We begin with the raw amino-acid sequence, 174 residues long: uncharacterized protein (174 aa).

The disordered stretch occupies residues 138–174 (VNLTSKSSGRSDEEGTTRRAPVLKTRADFVSRKDKHR). The segment covering 162–174 (TRADFVSRKDKHR) has biased composition (basic and acidic residues).

This is an uncharacterized protein from Bos taurus (Bovine).